The following is a 194-amino-acid chain: Orotate phosphoribosyltransferase (194 aa).

5-phospho-alpha-D-ribose 1-diphosphate contacts are provided by residues lysine 98 and 122–130; that span reads EDVLTTGGS. 2 residues coordinate orotate: threonine 126 and arginine 154.

It belongs to the purine/pyrimidine phosphoribosyltransferase family. PyrE subfamily. As to quaternary structure, homodimer. Mg(2+) serves as cofactor.

The enzyme catalyses orotidine 5'-phosphate + diphosphate = orotate + 5-phospho-alpha-D-ribose 1-diphosphate. The protein operates within pyrimidine metabolism; UMP biosynthesis via de novo pathway; UMP from orotate: step 1/2. Its function is as follows. Catalyzes the transfer of a ribosyl phosphate group from 5-phosphoribose 1-diphosphate to orotate, leading to the formation of orotidine monophosphate (OMP). This chain is Orotate phosphoribosyltransferase, found in Deinococcus radiodurans (strain ATCC 13939 / DSM 20539 / JCM 16871 / CCUG 27074 / LMG 4051 / NBRC 15346 / NCIMB 9279 / VKM B-1422 / R1).